Consider the following 265-residue polypeptide: Gamma-secretase subunit APH-1A (265 aa).

At 1-2 (MG) the chain is on the lumenal side. The helical transmembrane segment at 3–23 (AAVFFGCTFVAFGPAFALFLI) threads the bilayer. Over 24–31 (TVAGDPLR) the chain is Cytoplasmic. The helical transmembrane segment at 32 to 52 (VIILVAGAFFWLVSLLLASVV) threads the bilayer. Residues 53 to 68 (WFILVHVTDRSDARLQ) lie on the Lumenal side of the membrane. Residues 69–89 (YGLLIFGAAVSVLLQEVFRFA) traverse the membrane as a helical segment. The Cytoplasmic segment spans residues 90–118 (YYKLLKKADEGLASLSEDGRSPISIRQMA). Residues 119–139 (YVSGLSFGIISGVFSVINILA) form a helical membrane-spanning segment. At 140–158 (DALGPGVVGIHGDSPYYFL) the chain is on the lumenal side. Residues 159 to 179 (TSAFLTAAIILLHTFWGVVFF) traverse the membrane as a helical segment. At 180-186 (DACERRR) the chain is on the cytoplasmic side. The helical transmembrane segment at 187–207 (YWALGLVVGSHLLTSGLTFLN) threads the bilayer. At 208–213 (PWYEAS) the chain is on the lumenal side. The helical transmembrane segment at 214 to 234 (LLPIYAVTVSMGLWAFITAGG) threads the bilayer. The Cytoplasmic portion of the chain corresponds to 235–265 (SLRSIQRSLLCRRQEDSRVMVYSALRIPPED).

The protein belongs to the APH-1 family. As to quaternary structure, the functional gamma-secretase complex is composed of at least four polypeptides: a presenilin homodimer (PSEN1 or PSEN2), nicastrin (NCSTN), APH1 (APH1A or APH1B) and PSENEN/PEN2. In terms of tissue distribution, widely expressed. Expressed in leukocytes, lung, placenta, small intestine, liver, kidney, spleen thymus, skeletal muscle, heart and brain. Isoform 1 and isoform 2 are nearly expressed at the same level.

It is found in the endoplasmic reticulum membrane. It localises to the golgi apparatus. The protein localises to the golgi stack membrane. In terms of biological role, non-catalytic subunit of the gamma-secretase complex, an endoprotease complex that catalyzes the intramembrane cleavage of integral membrane proteins such as Notch receptors and APP (amyloid-beta precursor protein). Required for normal gamma-secretase assembly. The gamma-secretase complex plays a role in Notch and Wnt signaling cascades and regulation of downstream processes via its role in processing key regulatory proteins, and by regulating cytosolic CTNNB1 levels. The chain is Gamma-secretase subunit APH-1A (APH1A) from Homo sapiens (Human).